The following is a 275-amino-acid chain: Dermonecrotic toxin SpaSicTox-betaIIA3 (275 aa).

His5 is an active-site residue. Glu25 and Asp27 together coordinate Mg(2+). His41 serves as the catalytic Nucleophile. Cystine bridges form between Cys45/Cys51 and Cys47/Cys190. Asp85 provides a ligand contact to Mg(2+).

This sequence belongs to the arthropod phospholipase D family. Class II subfamily. Mg(2+) serves as cofactor. As to expression, expressed by the venom gland.

The protein localises to the secreted. It carries out the reaction an N-(acyl)-sphingosylphosphocholine = an N-(acyl)-sphingosyl-1,3-cyclic phosphate + choline. The catalysed reaction is an N-(acyl)-sphingosylphosphoethanolamine = an N-(acyl)-sphingosyl-1,3-cyclic phosphate + ethanolamine. The enzyme catalyses a 1-acyl-sn-glycero-3-phosphocholine = a 1-acyl-sn-glycero-2,3-cyclic phosphate + choline. It catalyses the reaction a 1-acyl-sn-glycero-3-phosphoethanolamine = a 1-acyl-sn-glycero-2,3-cyclic phosphate + ethanolamine. Dermonecrotic toxins cleave the phosphodiester linkage between the phosphate and headgroup of certain phospholipids (sphingolipid and lysolipid substrates), forming an alcohol (often choline) and a cyclic phosphate. This toxin acts on sphingomyelin (SM). It may also act on ceramide phosphoethanolamine (CPE), lysophosphatidylcholine (LPC) and lysophosphatidylethanolamine (LPE), but not on lysophosphatidylserine (LPS), and lysophosphatidylglycerol (LPG). It acts by transphosphatidylation, releasing exclusively cyclic phosphate products as second products. Induces dermonecrosis, hemolysis, increased vascular permeability, edema, inflammatory response, and platelet aggregation. This is Dermonecrotic toxin SpaSicTox-betaIIA3 from Sicarius patagonicus (Six-eyed sand spider).